Here is a 542-residue protein sequence, read N- to C-terminus: L-ornithine N(5)-monooxygenase (542 aa).

Residues 45–53 and Gln-64 contribute to the FAD site; that span reads EKHEVFRWH. A substrate-binding site is contributed by Lys-69. 218–221 is a binding site for NADP(+); the sequence is SGQS. Substrate contacts are provided by residues 263 to 266 and Asn-294; that span reads NEIF. 294-296 contributes to the NADP(+) binding site; the sequence is NYS. Residues 443–472 are disordered; the sequence is FFHDSSPSTASSSTVSTPPTSPETSRFSSP. The span at 447-472 shows a compositional bias: low complexity; that stretch reads SSPSTASSSTVSTPPTSPETSRFSSP. Residue 518-520 participates in FAD binding; the sequence is TLL. Ser-521 provides a ligand contact to substrate.

This sequence belongs to the lysine N(6)-hydroxylase/L-ornithine N(5)-oxygenase family. Homotetramer. Requires FAD as cofactor.

The enzyme catalyses L-ornithine + NADPH + O2 = N(5)-hydroxy-L-ornithine + NADP(+) + H2O. It catalyses the reaction L-ornithine + NADH + O2 = N(5)-hydroxy-L-ornithine + NAD(+) + H2O. It functions in the pathway siderophore biosynthesis. Its function is as follows. L-ornithine N(5)-monooxygenase; part of the gene cluster that mediates the biosynthesis of coprinoferrin, an acylated tripeptide hydroxamate siderophore. The biosynthesis of coprinoferrin depends on the hydroxylation of ornithine to N(5)-hydroxyornithine, catalyzed by the monooxygenase cpf2. The second step, the acylation of N(5)-hydroxy-L-ornithine to yield N(5)-hexanoyl-N(5)-hydroxyl-L-ornithine is catalyzed by a not yet identified acyltransferase. Finally, assembly of coprinoferrin is catalyzed by the nonribosomal peptide synthase (NRPS) cpf1 via amide bond formation between three N(5)-hexanoyl-N(5)-hydroxyl-L-ornithine molecules to release the linear trimer. Interestingly, proteins seemingly not directly related to biosynthesis, such as transcription factors, replication factors, and autophagy-related proteins, are conserved among the clusters homologous to the coprinoferrin cluster, suggesting that the cluster may also play developmental and cell biological functions. The polypeptide is L-ornithine N(5)-monooxygenase (Coprinopsis cinerea (strain Okayama-7 / 130 / ATCC MYA-4618 / FGSC 9003) (Inky cap fungus)).